We begin with the raw amino-acid sequence, 193 residues long: Large ribosomal subunit protein eL18 (193 aa).

Residues 158-193 are disordered; sequence HFGAAGVPGSHAKPFTSNRGKERQRSSARRRAFRHK. Positions 183-193 are enriched in basic residues; the sequence is SSARRRAFRHK.

This sequence belongs to the eukaryotic ribosomal protein eL18 family.

The protein localises to the cytoplasm. The polypeptide is Large ribosomal subunit protein eL18 (RPL18) (Trypanosoma cruzi (strain CL Brener)).